We begin with the raw amino-acid sequence, 77 residues long: Large ribosomal subunit protein bL28 (77 aa).

A disordered region spans residues 1–25 (MARVCQVTGKAPMSGNNVSHANNKT).

This sequence belongs to the bacterial ribosomal protein bL28 family.

The chain is Large ribosomal subunit protein bL28 from Paraburkholderia xenovorans (strain LB400).